Reading from the N-terminus, the 383-residue chain is MKFSQALLSLASLALAAALPHASTPVYTPSTTPSPTPTPSASGSFATTSGIQFVIDGEAGYFPGSNAYWIGFLKNNSDVDLVFDHMASSGLRILRVWGFNDVNTAPTDGSVYFQLHQDGKSTINTGKDGLQRLDYVVHSAEKHGIKLIINFVNYWDDYGGMNAYMRAYGGGDKADWFENEGIQAAYQAYVEAVVKRYINSTAVFAWELANEPRCTGCEPSVLHNWIEKTSAFIKGLDEKHLVCIGDGSDGSYPFQYTEGSDFAAALTIDTIDFGTFHLYPDSWGTNNDWGKLWITSHAAACAAAGKPCLFEEYGVTSNHCAIEKQWQNAALNATGIAADLYWQYGDTLSSGPSPDDGNTFYYGSEEFECLVTNHVETIERSAK.

The signal sequence occupies residues 1 to 18 (MKFSQALLSLASLALAAA). N-linked (GlcNAc...) asparagine glycosylation is present at Asn-75. Trp-97 is a substrate binding site. N-linked (GlcNAc...) asparagine glycosylation is present at Asn-199. Substrate-binding positions include Asn-210 and 211–213 (EPR). Glu-211 serves as the catalytic Proton donor/acceptor. Cys-214 and Cys-217 form a disulfide bridge. Positions 279 and 283 each coordinate substrate. Cys-301 and Cys-308 form a disulfide bridge. The Nucleophile role is filled by Glu-312. Cysteines 320 and 369 form a disulfide. A glycan (N-linked (GlcNAc...) asparagine) is linked at Asn-332. Position 342 (Trp-342) interacts with substrate.

The protein belongs to the glycosyl hydrolase 5 (cellulase A) family. Monomer.

It is found in the secreted. The catalysed reaction is Random hydrolysis of (1-&gt;4)-beta-D-mannosidic linkages in mannans, galactomannans and glucomannans.. Its function is as follows. Endo-1,4-mannanase that catalyzes the random hydrolysis of (1-&gt;4)-beta-D-mannosidic linkages in mannans and heteromannans. It is a crucial enzyme for depolymerization of seed galactomannans and wood galactoglucomannans. Active against locust bean gum and gum guar. Also has transglycosylation activity. The chain is Mannan endo-1,4-beta-mannosidase A (manA) from Emericella nidulans (strain FGSC A4 / ATCC 38163 / CBS 112.46 / NRRL 194 / M139) (Aspergillus nidulans).